Here is a 142-residue protein sequence, read N- to C-terminus: Hemoglobin subunit alpha (142 aa).

One can recognise a Globin domain in the interval 2–142; sequence HLTADDKKHI…VSNVLTSKYR (141 aa). Positions 59 and 88 each coordinate heme b.

Belongs to the globin family. As to quaternary structure, heterotetramer of two alpha chains and two beta chains. In terms of tissue distribution, red blood cells.

Its function is as follows. Involved in oxygen transport from the lung to the various peripheral tissues. The protein is Hemoglobin subunit alpha (hba-A) of Xenopus tropicalis (Western clawed frog).